We begin with the raw amino-acid sequence, 203 residues long: Ribonuclease HII (203 aa).

An RNase H type-2 domain is found at 18 to 203; the sequence is GQYAGVDEVG…SFRPVREALA (186 aa). A divalent metal cation-binding residues include Asp-24, Glu-25, and Asp-116.

This sequence belongs to the RNase HII family. Requires Mn(2+) as cofactor. It depends on Mg(2+) as a cofactor.

The protein localises to the cytoplasm. It carries out the reaction Endonucleolytic cleavage to 5'-phosphomonoester.. Its function is as follows. Endonuclease that specifically degrades the RNA of RNA-DNA hybrids. This chain is Ribonuclease HII, found in Shewanella pealeana (strain ATCC 700345 / ANG-SQ1).